The sequence spans 184 residues: Non-specific lipid transfer protein GPI-anchored 6 (184 aa).

Positions 1 to 24 (MEKSTRTLFITIVITSMLLGFGNS) are cleaved as a signal peptide. Disulfide bonds link cysteine 33/cysteine 74, cysteine 43/cysteine 58, cysteine 59/cysteine 101, and cysteine 72/cysteine 111. The segment at 138 to 158 (NSTSPTQIHKDGTGGGKAEPV) is disordered. Serine 160 carries GPI-anchor amidated serine lipidation. The propeptide at 161-184 (NGWKEKSWLGVELLIYLLVSLIFF) is removed in mature form.

Belongs to the plant LTP family. As to expression, preferentially expressed in the shoot apical meristem and the root meristem. Also present in the ovules and developing embryos. Observed in cotyledons, hypocotyls, flowers, leaves and siliques. Up-regulated in the epidermis of stems.

The protein resides in the cell membrane. Its function is as follows. Lipid transfer protein involved in seed and ovule maturation and development, probably by regulating the fatty acids homeostasis during suberin and sporopollenin biosynthesis or deposition. Contributes to pre-invasive defense against some non-host powdery mildew pathogens by preventing the penetration of the epidermal cell wall by the fungal agents (e.g. Blumeria graminis f. sp. hordei (Bgh)). The protein is Non-specific lipid transfer protein GPI-anchored 6 of Arabidopsis thaliana (Mouse-ear cress).